The primary structure comprises 194 residues: Dephospho-CoA kinase (194 aa).

The DPCK domain occupies 4-194; that stretch reads ALGLTGSIGM…HLVSKLTEGT (191 aa). 12-17 contributes to the ATP binding site; that stretch reads GMGKST.

The protein belongs to the CoaE family.

It is found in the cytoplasm. It catalyses the reaction 3'-dephospho-CoA + ATP = ADP + CoA + H(+). It participates in cofactor biosynthesis; coenzyme A biosynthesis; CoA from (R)-pantothenate: step 5/5. Functionally, catalyzes the phosphorylation of the 3'-hydroxyl group of dephosphocoenzyme A to form coenzyme A. This Jannaschia sp. (strain CCS1) protein is Dephospho-CoA kinase.